The primary structure comprises 178 residues: Matrix-remodeling-associated protein 7 (178 aa).

The helical transmembrane segment at 7 to 27 (LLAALPALVTALALLLAWLLL) threads the bilayer. The segment at 33 to 121 (RVPAPESTAS…AFSFKYSPGQ (89 aa)) is disordered. A compositionally biased stretch (pro residues) spans 48–65 (APAPPEPPESCAPEPAPE). Over residues 76–85 (PEESEAEEPA) the composition is skewed to acidic residues. A phosphoserine mark is found at serine 79 and serine 165.

It localises to the membrane. The protein is Matrix-remodeling-associated protein 7 (Mxra7) of Mus musculus (Mouse).